A 492-amino-acid polypeptide reads, in one-letter code: Probable cobyric acid synthase (492 aa).

The region spanning 252–444 is the GATase cobBQ-type domain; the sequence is PIEVNIVKFS…FHGILENFEF (193 aa). C330 serves as the catalytic Nucleophile. H436 is an active-site residue.

It belongs to the CobB/CobQ family. CobQ subfamily.

It participates in cofactor biosynthesis; adenosylcobalamin biosynthesis. Its function is as follows. Catalyzes amidations at positions B, D, E, and G on adenosylcobyrinic A,C-diamide. NH(2) groups are provided by glutamine, and one molecule of ATP is hydrogenolyzed for each amidation. The protein is Probable cobyric acid synthase of Methanococcus maripaludis (strain C6 / ATCC BAA-1332).